The primary structure comprises 51 residues: MKKFELYEVKDGKLVRKNPFCVRCSNGVFMADHGDRYACGKCGYTEWKNRE.

4 residues coordinate Zn(2+): C21, C24, C39, and C42. A C4-type zinc finger spans residues 21 to 42 (CVRCSNGVFMADHGDRYACGKC).

The protein belongs to the eukaryotic ribosomal protein eS31 family. In terms of assembly, part of the 30S ribosomal subunit. Zn(2+) serves as cofactor.

This Methanothermobacter thermautotrophicus (strain ATCC 29096 / DSM 1053 / JCM 10044 / NBRC 100330 / Delta H) (Methanobacterium thermoautotrophicum) protein is Small ribosomal subunit protein eS31.